The sequence spans 129 residues: Small ribosomal subunit protein uS11 (129 aa).

This sequence belongs to the universal ribosomal protein uS11 family. In terms of assembly, part of the 30S ribosomal subunit. Interacts with proteins S7 and S18. Binds to IF-3.

Its function is as follows. Located on the platform of the 30S subunit, it bridges several disparate RNA helices of the 16S rRNA. Forms part of the Shine-Dalgarno cleft in the 70S ribosome. The protein is Small ribosomal subunit protein uS11 of Erythrobacter litoralis (strain HTCC2594).